Here is a 346-residue protein sequence, read N- to C-terminus: Selenoprotein V (346 aa).

Disordered stretches follow at residues 1 to 40 and 151 to 206; these read MNNQARTPAPSSARTSTSVRASTPTRTPTPLRTPTPVRTR and LDPP…PGPT. Over residues 151-162 the composition is skewed to pro residues; it reads LDPPPEPAPELP. Positions 270–273 form a cross-link, cysteinyl-selenocysteine (Cys-Sec); redox-active; it reads CGLU. Sec-273 is a non-standard amino acid (selenocysteine).

This sequence belongs to the SelWTH family. In terms of processing, truncated SELENOV proteins produced by failed UGA/Sec decoding are ubiquitinated by the CRL2(APPBP2) complex, which recognizes the glycine (Gly) at the C-terminus of truncated SELENOV proteins. In terms of tissue distribution, testis specific.

Functionally, may be involved in a redox-related process. In Homo sapiens (Human), this protein is Selenoprotein V.